The sequence spans 605 residues: Dynein axonemal intermediate chain 2 (605 aa).

7 WD repeats span residues 150-203 (KTIN…IWDL), 208-246 (KPEL…CWDT), 253-294 (AELS…WWDI), 301-347 (TEVV…SCNR), 355-393 (KIVC…IWSE), 399-437 (SIMW…IWDF), and 443-481 (DPTL…LLEV). Positions 568–605 (IKLTPVPQQPSPEEDQVVEEGEEAAGEEGDEEVEEDLA) are disordered. Residues 579–605 (PEEDQVVEEGEEAAGEEGDEEVEEDLA) are compositionally biased toward acidic residues.

This sequence belongs to the dynein intermediate chain family. Consists of at least two heavy chains and a number of intermediate and light chains. Interacts with DNAAF2. Interacts with DNAAF6/PIH1D3. Interacts with HEATR2; probably involved in outer arm dynein assembly. Interacts with CFAP53. As to expression, highly expressed in trachea and testis. Expressed in respiratory ciliated cells (at protein level).

The protein resides in the cytoplasm. It localises to the cytoskeleton. The protein localises to the cilium axoneme. Its subcellular location is the dynein axonemal particle. In terms of biological role, part of the dynein complex of respiratory cilia. This Homo sapiens (Human) protein is Dynein axonemal intermediate chain 2.